Here is a 209-residue protein sequence, read N- to C-terminus: CASP-like protein 1B1 (209 aa).

Basic and acidic residues predominate over residues 1 to 10 (MDLERGDKKP). The tract at residues 1–39 (MDLERGDKKPPPPPPPAPRTAAATTTTTTTPACSGKKRP) is disordered. The Cytoplasmic segment spans residues 1-49 (MDLERGDKKPPPPPPPAPRTAAATTTTTTTPACSGKKRPPLRDSLVALQ). Residues 19–32 (RTAAATTTTTTTPA) show a composition bias toward low complexity. Residues 50-70 (PVLLRAAAALAAAAAAAVMAL) traverse the membrane as a helical segment. At 71-100 (DAQSYTAVVAIVGTRPLTQTFTAKFSDTPA) the chain is on the extracellular side. Residues 101-121 (FVYFVIANAIAAAYNLLVLLV) form a helical membrane-spanning segment. The Cytoplasmic segment spans residues 122–134 (RRRRRTTAGLVVR). Residues 135-155 (MLDMVVMALLATGAAAAASMA) form a helical membrane-spanning segment. At 156–180 (ELGRNGNARARWNPVCDRFGSFCRR) the chain is on the extracellular side. A helical transmembrane segment spans residues 181-201 (GGAALAASFVGVALMLALNLL). Topologically, residues 202 to 209 (SAASGAGC) are cytoplasmic.

It belongs to the Casparian strip membrane proteins (CASP) family. In terms of assembly, homodimer and heterodimers.

It localises to the cell membrane. This is CASP-like protein 1B1 from Zea mays (Maize).